Here is a 286-residue protein sequence, read N- to C-terminus: Bifunctional protein FolD (286 aa).

Residues 165 to 167 (GRS) and Ser190 each bind NADP(+).

This sequence belongs to the tetrahydrofolate dehydrogenase/cyclohydrolase family. In terms of assembly, homodimer.

The enzyme catalyses (6R)-5,10-methylene-5,6,7,8-tetrahydrofolate + NADP(+) = (6R)-5,10-methenyltetrahydrofolate + NADPH. It carries out the reaction (6R)-5,10-methenyltetrahydrofolate + H2O = (6R)-10-formyltetrahydrofolate + H(+). Its pathway is one-carbon metabolism; tetrahydrofolate interconversion. In terms of biological role, catalyzes the oxidation of 5,10-methylenetetrahydrofolate to 5,10-methenyltetrahydrofolate and then the hydrolysis of 5,10-methenyltetrahydrofolate to 10-formyltetrahydrofolate. The chain is Bifunctional protein FolD from Paraburkholderia xenovorans (strain LB400).